A 373-amino-acid polypeptide reads, in one-letter code: Transcription factor NF-E2 45 kDa subunit (373 aa).

Disordered stretches follow at residues M1–G22 and L40–L60. Positions M1 to Y83 are required for interaction with MAPK8. The segment at M1–E206 is transactivation domain. 2 consecutive short sequence motifs (PXY motif) follow at residues P61–Y65 and P79–Y83. Residues L131–T163 are disordered. S157 carries the phosphoserine; by MAPK8 modification. The residue at position 170 (S170) is a Phosphoserine; by PKA. The interval E206 to R225 is disordered. One can recognise a bZIP domain in the interval L266 to L329. Residues R268–K287 form a basic motif region. The segment at I291–L298 is leucine-zipper. Residue K368 forms a Glycyl lysine isopeptide (Lys-Gly) (interchain with G-Cter in SUMO); alternate linkage. K368 participates in a covalent cross-link: Glycyl lysine isopeptide (Lys-Gly) (interchain with G-Cter in SUMO1); alternate.

Belongs to the bZIP family. CNC subfamily. As to quaternary structure, homodimer; can bind DNA as a homodimer. Erythroid transcription activator nuclear factor erythroid-derived 2 (NF-E2), composed of a heterodimer of NFE2 and MAFK, possesses transactivation activity on beta-globin. Also forms high affinity heterodimer with MAFG; the interaction promotes erythropoiesis. Interacts (via the PXY motif 1) with ITCH (via the WW 1 domain); the interaction promotes 'Lys63'-linked ubiquitination of NFE2, translocates it to the cytoplasm and inhibits its transactivation activity. Interacts with KMT2D/MLL2; the interaction promotes transactivation of the beta-globin locus. Interacts with MAPK8 (phosphorylated form); the interaction leads to phosphorylation of NFE2 in undifferentiated cells. Post-translationally, phosphorylated on serine residues. In undifferentiated erythrocytes, phosphorylated by MAPK8 which then leads to ubiquitination and protein degradation. In terms of processing, sumoylated. Sumoylation is required for translocation to nuclear bodies PODs, anchoring to the gene loci, and transactivation of the beta-globin gene. Ubiquitinated mainly by 'Lys63'-linked ubiquitin. Polyubiquitination with 'Lys63'-linked ubiquitin by ITCH retains NFE2 in the cytoplasm preventing its transactivation activity. In undifferentiated erythrocyte, ubiquitinated after MAPK8-mediatd phosphorylation leading to protein degradation.

It localises to the nucleus. The protein localises to the PML body. The protein resides in the cytoplasm. Component of the NF-E2 complex essential for regulating erythroid and megakaryocytic maturation and differentiation. Binds to the hypersensitive site 2 (HS2) of the beta-globin control region (LCR). This subunit (NFE2) recognizes the TCAT/C sequence of the AP-1-like core palindrome present in a number of erythroid and megakaryocytic gene promoters. Requires MAFK or other small MAF proteins for binding to the NF-E2 motif. May play a role in all aspects of hemoglobin production from globin and heme synthesis to procurement of iron. This Rattus norvegicus (Rat) protein is Transcription factor NF-E2 45 kDa subunit (Nfe2).